A 545-amino-acid polypeptide reads, in one-letter code: Lysine--tRNA ligase (545 aa).

The short motif at Pro-42–His-50 is the 'HIGH' region element. A 'KMSKS' region motif is present at residues Pro-307–Ser-311.

This sequence belongs to the class-I aminoacyl-tRNA synthetase family.

It localises to the cytoplasm. It catalyses the reaction tRNA(Lys) + L-lysine + ATP = L-lysyl-tRNA(Lys) + AMP + diphosphate. The polypeptide is Lysine--tRNA ligase (Haloarcula marismortui (strain ATCC 43049 / DSM 3752 / JCM 8966 / VKM B-1809) (Halobacterium marismortui)).